The sequence spans 411 residues: 2-acylphloroglucinol 4-prenyltransferase, chloroplastic (411 aa).

A chloroplast-targeting transit peptide spans 1–91 (MELSSVSSFS…CNDQRGNSIR (91 aa)). A run of 8 helical transmembrane segments spans residues 159-179 (LLGM…NQIF), 198-218 (ISVE…FILI), 226-246 (LLTS…VPPF), 253-273 (ITAF…VYYA), 278-298 (LGLA…ITFM), 333-353 (LLGT…AIIW), 356-376 (AFKS…LIFQ), and 391-411 (KSFY…YLFI).

Belongs to the UbiA prenyltransferase family. The cofactor is Mg(2+). As to expression, expressed in glandular trichomes called lupulin glands, and in early stage and mature cones. Detected in leaves, but not in root, stem and first stage of flowers. No expression in male flowers.

It localises to the plastid. The protein localises to the chloroplast membrane. The catalysed reaction is a 2-acylphloroglucinol + dimethylallyl diphosphate = a 2-acyl-4-prenylphloroglucinol + diphosphate. The protein operates within secondary metabolite biosynthesis. In terms of biological role, involved in the biosynthesis of prenylated phenolics natural products which contribute to the bitter taste of beer and display broad biological activities. Catalyzes the first prenylation step in the beta-bitter acid pathway. Abble to transfer dimethylallyl diphosphate (DMAPP) or geranyl diphosphate (GPP) to phlorisovalerophenone (PIVP), phlorisobutrylphenone (PIMP) and naringenin chalcone. Can also use phlorisobutyrophenone (PIBP) and phlormethylbutanophenone (PMBP) as substrates, but not 6'-O-methylated chalcone or naringenin. In Humulus lupulus (European hop), this protein is 2-acylphloroglucinol 4-prenyltransferase, chloroplastic.